A 424-amino-acid chain; its full sequence is Glutamate-1-semialdehyde 2,1-aminomutase (424 aa).

Residue Lys263 is modified to N6-(pyridoxal phosphate)lysine.

It belongs to the class-III pyridoxal-phosphate-dependent aminotransferase family. HemL subfamily. Homodimer. It depends on pyridoxal 5'-phosphate as a cofactor.

Its subcellular location is the cytoplasm. The catalysed reaction is (S)-4-amino-5-oxopentanoate = 5-aminolevulinate. It participates in porphyrin-containing compound metabolism; protoporphyrin-IX biosynthesis; 5-aminolevulinate from L-glutamyl-tRNA(Glu): step 2/2. The chain is Glutamate-1-semialdehyde 2,1-aminomutase from Campylobacter jejuni subsp. jejuni serotype O:6 (strain 81116 / NCTC 11828).